Here is a 713-residue protein sequence, read N- to C-terminus: Cyclomaltodextrin glucanotransferase (713 aa).

A signal peptide spans 1-27 (MKKQVKWLTSVSMSVGIALGAALPVWA). Residues 28-165 (SPDTSVNNKL…NIKVVMDFAP (138 aa)) form an A1 region. Residues Asp54, Asn56, Asn59, Asn60, Gly78, and Asp80 each coordinate Ca(2+). 127–128 (YW) is a binding site for substrate. A Ca(2+)-binding site is contributed by Asn166. Positions 166–229 (NHTNPASSTD…NLYDLADINQ (64 aa)) are b. Residue His167 participates in substrate binding. Ile217 serves as a coordination point for Ca(2+). Residue 220–223 (NLYD) participates in substrate binding. Asp226 contacts Ca(2+). The tract at residues 230–434 (NNNTIDSYLK…LRKSNPALAY (205 aa)) is A2. Arg254 contributes to the substrate binding site. Asp256 serves as the catalytic Nucleophile. 259–260 (KH) serves as a coordination point for substrate. His260 contacts Ca(2+). Residue Glu285 is the Proton donor of the active site. 3 residues coordinate substrate: His355, Asp399, and Arg403. Positions 435-522 (GSTTQRWVNS…GTAVWQYTTT (88 aa)) are c. The interval 523-609 (ESSPIIGNVG…SAAFNNFNVL (87 aa)) is d. In terms of domain architecture, IPT/TIG spans 526-606 (PIIGNVGPTM…GTTSAAFNNF (81 aa)). Positions 608 to 713 (VLTADQVTVR…VATVTVDWQN (106 aa)) constitute a CBM20 domain. The tract at residues 610–713 (TADQVTVRFK…VATVTVDWQN (104 aa)) is e.

The protein belongs to the glycosyl hydrolase 13 family. As to quaternary structure, monomer. The cofactor is Ca(2+).

It is found in the secreted. The enzyme catalyses Cyclizes part of a (1-&gt;4)-alpha-D-glucan chain by formation of a (1-&gt;4)-alpha-D-glucosidic bond.. The polypeptide is Cyclomaltodextrin glucanotransferase (Paenibacillus macerans (Bacillus macerans)).